The following is a 609-amino-acid chain: Replication protein A 70 kDa DNA-binding subunit (609 aa).

The interval Ile112–Ser164 is disordered. The span at Pro124 to Ser151 shows a compositional bias: pro residues. The OB DNA-binding region spans Trp189 to Asn273. The segment at Cys472–Cys494 adopts a C4-type zinc-finger fold.

The protein belongs to the replication factor A protein 1 family. Component of the heterotrimeric canonical replication protein A complex (RPA). Interacts with rpain-a.

The protein localises to the nucleus. It localises to the PML body. In terms of biological role, as part of the heterotrimeric replication protein A complex (RPA/RP-A), binds and stabilizes single-stranded DNA intermediates, that form during DNA replication or upon DNA stress. It prevents their reannealing and in parallel, recruits and activates different proteins and complexes involved in DNA metabolism. Thereby, it plays an essential role both in DNA replication and the cellular response to DNA damage. This is Replication protein A 70 kDa DNA-binding subunit (rpa1) from Xenopus tropicalis (Western clawed frog).